We begin with the raw amino-acid sequence, 136 residues long: Mediator of RNA polymerase II transcription subunit 22 (136 aa).

This sequence belongs to the Mediator complex subunit 22 family. As to quaternary structure, component of the Mediator complex.

Its subcellular location is the nucleus. Its function is as follows. Component of the Mediator complex, a coactivator involved in the regulated transcription of nearly all RNA polymerase II-dependent genes. Mediator functions as a bridge to convey information from gene-specific regulatory proteins to the basal RNA polymerase II transcription machinery. Mediator is recruited to promoters by direct interactions with regulatory proteins and serves as a scaffold for the assembly of a functional preinitiation complex with RNA polymerase II and the general transcription factors. The protein is Mediator of RNA polymerase II transcription subunit 22 (med22) of Schizosaccharomyces pombe (strain 972 / ATCC 24843) (Fission yeast).